The sequence spans 184 residues: NADH-quinone oxidoreductase subunit B (184 aa).

Residues Cys-37, Cys-38, Cys-103, and Cys-132 each coordinate [4Fe-4S] cluster.

It belongs to the complex I 20 kDa subunit family. In terms of assembly, NDH-1 is composed of 14 different subunits. Subunits NuoB, C, D, E, F, and G constitute the peripheral sector of the complex. [4Fe-4S] cluster is required as a cofactor.

It localises to the cell membrane. The enzyme catalyses a quinone + NADH + 5 H(+)(in) = a quinol + NAD(+) + 4 H(+)(out). In terms of biological role, NDH-1 shuttles electrons from NADH, via FMN and iron-sulfur (Fe-S) centers, to quinones in the respiratory chain. The immediate electron acceptor for the enzyme in this species is believed to be a menaquinone. Couples the redox reaction to proton translocation (for every two electrons transferred, four hydrogen ions are translocated across the cytoplasmic membrane), and thus conserves the redox energy in a proton gradient. This is NADH-quinone oxidoreductase subunit B from Mycolicibacterium smegmatis (strain ATCC 700084 / mc(2)155) (Mycobacterium smegmatis).